The primary structure comprises 335 residues: Cell division protein ZipA (335 aa).

Residues 1–6 are Periplasmic-facing; it reads MENLQL. Residues 7-27 form a helical membrane-spanning segment; the sequence is VLFVLGAVAIIAVLVHGFWSI. At 28-335 the chain is on the cytoplasmic side; that stretch reads RRQQPKSLKE…SYLQRIRAQM (308 aa). Disordered stretches follow at residues 37–128 and 163–185; these read ESPM…NEEV and RPAPRVEAPQSVAPASVEPVSVE. Positions 170-185 are enriched in low complexity; sequence APQSVAPASVEPVSVE.

This sequence belongs to the ZipA family. As to quaternary structure, interacts with FtsZ via their C-terminal domains.

The protein localises to the cell inner membrane. In terms of biological role, essential cell division protein that stabilizes the FtsZ protofilaments by cross-linking them and that serves as a cytoplasmic membrane anchor for the Z ring. Also required for the recruitment to the septal ring of downstream cell division proteins. The polypeptide is Cell division protein ZipA (Shewanella loihica (strain ATCC BAA-1088 / PV-4)).